The primary structure comprises 688 residues: MAKEFLIELGTEELPPKQLRTLAEAFAANFAAELATADIAHEGVTWFATPRRLALKVANLAESQPDRVVEKRGPAVNVAFDADGKPTKAAEGWARGNGITVEQAERLVTDKGEWLLFKEQVQGQQTASVVVEMAAKALANLPIAKPMRWGDKETQFIRPVKTLTILFGSELIQGEILGVASARTLRGHRFMGEAEFTIESAEQYPAILEERGKVIADYATRKAMIIEGSQQAAQQLGGIADLEDALVEEVTSLVEWPVVMTAKFEEKFLKVPAEALVYTMKGDQKYFPVYDASKKLLPNFIFVSNIESKEPRHIVEGNEKVVRPRLADAEFFFNTDRKRPLVDRLPLLENAIFQQQLGTIKDKTDRITELAGYIAEQIGADVEKSKRAGLLAKCDLMTSMVFEFTDTQGVMGMHYARHDGEAEEVAVALNEQYMPRFAGDELPSRGVSAAVAMADKLDTIVGIFGIGQAPKGSDPFALRRASLGVLRILVEYGYQLDLVDLIAKAKSLFGDRLTNANVEQEVIEFMLGRFPTWYQDAGFSIDIIQAVLARNPTKPADFDQRVKAVSHFRALEEAEALAAANKRVGNILAKYDGELGEEIDLALLQEDAEKALAEAVEIMAEALEPAFATGNYQEALSKLAGLRAPVDAFFDNVMVMADDEALKKNRLTLLNKLRNLFLQIADISLLQK.

Belongs to the class-II aminoacyl-tRNA synthetase family. As to quaternary structure, tetramer of two alpha and two beta subunits.

Its subcellular location is the cytoplasm. It carries out the reaction tRNA(Gly) + glycine + ATP = glycyl-tRNA(Gly) + AMP + diphosphate. In Vibrio cholerae serotype O1 (strain ATCC 39541 / Classical Ogawa 395 / O395), this protein is Glycine--tRNA ligase beta subunit.